The following is a 349-amino-acid chain: Isopentenyl-diphosphate delta-isomerase (349 aa).

Arg-5–Lys-6 contacts substrate. Residues Ser-61, Ser-62–Thr-64, Ser-92, and Asn-120 contribute to the FMN site. Residue Ser-92–Arg-94 coordinates substrate. Gln-159 contacts substrate. Glu-160 lines the Mg(2+) pocket. FMN is bound by residues Lys-189, Thr-219, Gly-269–Arg-271, and Ala-290–Arg-291.

The protein belongs to the IPP isomerase type 2 family. As to quaternary structure, homooctamer. Dimer of tetramers. It depends on FMN as a cofactor. NADPH is required as a cofactor. The cofactor is Mg(2+).

The protein localises to the cytoplasm. It carries out the reaction isopentenyl diphosphate = dimethylallyl diphosphate. In terms of biological role, involved in the biosynthesis of isoprenoids. Catalyzes the 1,3-allylic rearrangement of the homoallylic substrate isopentenyl (IPP) to its allylic isomer, dimethylallyl diphosphate (DMAPP). The chain is Isopentenyl-diphosphate delta-isomerase from Picrophilus torridus (strain ATCC 700027 / DSM 9790 / JCM 10055 / NBRC 100828 / KAW 2/3).